Reading from the N-terminus, the 90-residue chain is U7-theraphotoxin-Hhn1e (90 aa).

The N-terminal stretch at 1–19 is a signal peptide; sequence MKTAIFTVVLALAVFAVLS. Positions 20–50 are excised as a propeptide; sequence FGWEANEKALSEEFTELIHEKEAASETEARE. Disulfide bonds link cysteine 51–cysteine 65, cysteine 58–cysteine 70, and cysteine 64–cysteine 81.

This sequence belongs to the neurotoxin 10 (Hwtx-1) family. 13 (Hntx-13) subfamily. In terms of tissue distribution, expressed by the venom gland.

The protein resides in the secreted. In terms of biological role, ion channel inhibitor. This Cyriopagopus hainanus (Chinese bird spider) protein is U7-theraphotoxin-Hhn1e.